The sequence spans 346 residues: Low specificity L-threonine aldolase (346 aa).

Residue Lys-207 is modified to N6-(pyridoxal phosphate)lysine.

Belongs to the threonine aldolase family. As to quaternary structure, homotetramer. Pyridoxal 5'-phosphate serves as cofactor.

It catalyses the reaction L-threonine = acetaldehyde + glycine. The catalysed reaction is L-allo-threonine = acetaldehyde + glycine. Its function is as follows. Catalyzes the cleavage of L-allo-threonine and L-threonine to glycine and acetaldehyde. This Pseudomonas aeruginosa (strain ATCC 15692 / DSM 22644 / CIP 104116 / JCM 14847 / LMG 12228 / 1C / PRS 101 / PAO1) protein is Low specificity L-threonine aldolase (ltaE).